A 95-amino-acid polypeptide reads, in one-letter code: MADDKPKEGVKTENNDHINLKVAGQDGSVVQFKIKRHTPLNKLMKAYCERQGLSMRQIRFRFDGQPINETDTPAQLEMEDEDTIDVFQQQTGGSF.

Lys-11 participates in a covalent cross-link: Glycyl lysine isopeptide (Lys-Gly) (interchain with G-Cter in SUMO). The 80-residue stretch at 16 to 95 (DHINLKVAGQ…VFQQQTGGSF (80 aa)) folds into the Ubiquitin-like domain. Residue Gly-93 forms a Glycyl lysine isopeptide (Gly-Lys) (interchain with K-? in acceptor proteins) linkage. A propeptide spanning residues 94-95 (SF) is cleaved from the precursor.

It belongs to the ubiquitin family. SUMO subfamily. Interacts with sae2 and ube2i. Covalently attached to a number of proteins, including top2. In terms of processing, polymeric chains can be formed through Lys-11 cross-linking. Post-translationally, cleavage of precursor form by a sentrin-specific protease is necessary for function.

It localises to the nucleus. In terms of biological role, ubiquitin-like protein that can be covalently attached to proteins as a monomer or as a lysine-linked polymer. Covalent attachment via an isopeptide bond to its substrates requires prior activation by the E1 complex sae1-sae2 and linkage to the E2 enzyme ube2i, and can be promoted by an E3 ligase such as pias1-4. This post-translational modification on lysine residues of proteins plays a crucial role in a number of cellular processes such as nuclear transport, DNA replication and repair, mitosis and signal transduction. Polymeric sumo2 chains are also susceptible to polyubiquitination which functions as a signal for proteasomal degradation of modified proteins. In Xenopus tropicalis (Western clawed frog), this protein is Small ubiquitin-related modifier 2 (sumo2).